The sequence spans 1621 residues: Lysophospholipase NTE1 (1621 aa).

Topologically, residues 1-12 (MSSIPTPPDANG) are cytoplasmic. Residues 13-33 (NPLIALAVAVIYAILYVLQGV) form a helical membrane-spanning segment. Topologically, residues 34–59 (KYGVSLLTIGIPSCIVRMLQYSLTIS) are lumenal. A helical transmembrane segment spans residues 60 to 80 (LGFPHLLALFAGALLALFFLI). At 81-1621 (RYRYLTRYAQ…RGNRLRRMSI (1541 aa)) the chain is on the cytoplasmic side. Disordered regions lie at residues 188–209 (PDASSQGTPTPSSDTNSPTRPS), 250–379 (EGEE…SVPR), 545–566 (QTATTTVKNEPLNGGSSPLDET), 648–667 (WNLNDSPHTDGQPVDPQRDD), 711–735 (VSALSTPNSPMFPPNAGTPLQGSTR), 772–791 (DDEASSISMSLHDSQGGASG), and 839–870 (FRSTSSNQENPNSTPGSKHRQSSFGSSNERPF). Low complexity-rich tracts occupy residues 195–209 (TPTPSSDTNSPTRPS) and 348–361 (RRSQSLRSSPRLNS). A nucleoside 3',5'-cyclic phosphate is bound by residues 788 to 907 (GASG…GYLS) and 951 to 1070 (RLLS…IAGR). Positions 839–867 (FRSTSSNQENPNSTPGSKHRQSSFGSSNE) are enriched in polar residues. The 165-residue stretch at 1316 to 1480 (LVLGGGGARG…MDNTPIQPLR (165 aa)) folds into the PNPLA domain. The short motif at 1320–1325 (GGGARG) is the GXGXXG element. Residues 1347 to 1351 (GCSIG) carry the GXSXG motif. The active-site Nucleophile is the S1349. D1467 (proton acceptor) is an active-site residue. The DGA/G signature appears at 1467-1469 (DGG).

This sequence belongs to the NTE family.

It localises to the endoplasmic reticulum membrane. The catalysed reaction is a 1-acyl-sn-glycero-3-phosphocholine + H2O = sn-glycerol 3-phosphocholine + a fatty acid + H(+). With respect to regulation, inhibited by organophosphorus esters. Its function is as follows. Intracellular phospholipase B that catalyzes the double deacylation of phosphatidylcholine (PC) to glycerophosphocholine (GroPCho). Plays an important role in membrane lipid homeostasis. Responsible for the rapid PC turnover in response to inositol, elevated temperatures, or when choline is present in the growth medium. This is Lysophospholipase NTE1 (NTE1) from Cryptococcus neoformans var. neoformans serotype D (strain B-3501A) (Filobasidiella neoformans).